The sequence spans 698 residues: Protein CRAC (698 aa).

Residues 22-122 (DVSYSSIMKK…FLTLLIARIR (101 aa)) form the PH domain. Positions 594–630 (TGGGSVPSSQSTNNLQSSTSSMSSLSSSSTSTTKRSH) are disordered. Over residues 601 to 626 (SSQSTNNLQSSTSSMSSLSSSSTSTT) the composition is skewed to low complexity.

Its subcellular location is the cytoplasm. In terms of biological role, couples activated G protein to adenylyl cyclase signal transduction from surface cAMP receptor. Pianissimo a cytosolic regulator and CRAC, are both essential for activation of the enzyme adenylyl cyclase. Pianissimo and CRAC do not function redundantly. Both proteins are integral components of the adenylyl cyclase activation pathway. The protein is Protein CRAC (dagA) of Dictyostelium discoideum (Social amoeba).